A 197-amino-acid polypeptide reads, in one-letter code: Cold-regulated 413 plasma membrane protein 1 (197 aa).

The Extracellular segment spans residues 1 to 40 (MPMKSLRNDHGTLKAMIGSDFNELTIAAKNLATHAFTLTG). The helical transmembrane segment at 41 to 61 (LGFGTSVLEWVASIAAIYLLV) threads the bilayer. Residues 62–71 (LDRTNWKTNM) are Cytoplasmic-facing. A helical transmembrane segment spans residues 72 to 92 (LTSLLIPYIFFSLPSLIFGIF). Over 93-94 (RG) the chain is Extracellular. A helical membrane pass occupies residues 95–115 (EIGKWIAFVAVVVQLFFPKHA). Residues 116 to 117 (RE) lie on the Cytoplasmic side of the membrane. The helical transmembrane segment at 118–138 (YLELPVALVLLAVVAPNLIAG) threads the bilayer. Topologically, residues 139-141 (TFR) are extracellular. The chain crosses the membrane as a helical span at residues 142 to 162 (DSWIGLAICLGIGCYLLQEHI). The Cytoplasmic segment spans residues 163-176 (RASGGFRNAFTKAN). The chain crosses the membrane as a helical span at residues 177 to 197 (GISNTVGIICLVVFPVWALIF).

This sequence belongs to the Cold-regulated 413 protein family.

It is found in the membrane. The chain is Cold-regulated 413 plasma membrane protein 1 (COR413PM1) from Arabidopsis thaliana (Mouse-ear cress).